The primary structure comprises 277 residues: Large ribosomal subunit protein uL2 (277 aa).

The segment at 219–277 (TVRGSVMNPNDHPHGGGEGKAPVGRKAPSTPWGKPALGLKTRNKKAKSDKLIVRRRNEK) is disordered. Over residues 264 to 277 (AKSDKLIVRRRNEK) the composition is skewed to basic and acidic residues.

Belongs to the universal ribosomal protein uL2 family. Part of the 50S ribosomal subunit. Forms a bridge to the 30S subunit in the 70S ribosome.

Functionally, one of the primary rRNA binding proteins. Required for association of the 30S and 50S subunits to form the 70S ribosome, for tRNA binding and peptide bond formation. It has been suggested to have peptidyltransferase activity; this is somewhat controversial. Makes several contacts with the 16S rRNA in the 70S ribosome. This Streptococcus sanguinis (strain SK36) protein is Large ribosomal subunit protein uL2.